Here is a 485-residue protein sequence, read N- to C-terminus: Taxane 13-alpha-hydroxylase (485 aa).

Cys431 provides a ligand contact to heme.

It belongs to the cytochrome P450 family. Heme serves as cofactor.

It catalyses the reaction taxa-4(20),11-dien-5alpha-ol + reduced [NADPH--hemoprotein reductase] + O2 = taxa-4(20),11-dien-5alpha,13alpha-diol + oxidized [NADPH--hemoprotein reductase] + H2O + H(+). It functions in the pathway alkaloid biosynthesis; taxol biosynthesis. In terms of biological role, involved in the transformation of a taxadienyl acetate by hydroxylation at C13 to yield taxadien-5-alpha-acetoxy-13-alpha-ol. The sequence is that of Taxane 13-alpha-hydroxylase (CYP725A2) from Taxus cuspidata (Japanese yew).